Here is a 479-residue protein sequence, read N- to C-terminus: MLSEKQGEETMMSSLNETIELNEEREEEKGASPGSGFKNFLWHGGSVYDAWFSCASNQVAQVLLTLPYSFSQLGMISGIIFQVFYGLMGSWTAYLISILYVEYRSRKEKENVSFKNHVIQWFEVLEGLLGPYWKAIGLAFNCTFLLFGSVIQLIACASNIYYINDHLDKRTWTYIFGACCATTVFIPSFHNYRIWSFLGLGMTTYTAWYMTIAAIVHGQVENVVHSGPKKMVWYFTGATNILYTFGGHAVTVEIMHAMWKPQKFKAIYFFATLYVFTLTLPSAIAVYWAFGDQLLDHSNAFSLLPRNAWRDAGVILMLIHQFITFGFACTPLYFVWEKVIGMHDTKSIFLRALARLPVVIPIWFLAIIFPFFGPINSAVGALLVSFTVYVIPASAHMLTYRSASARQNAAEKLPKVIPSWTLMYVINAFVVIWVTIVGFGFGGWASMTNFIKQVDTFGLFAKCYQCPPKLPASNHTMHH.

Residues 1–58 are Cytoplasmic-facing; sequence MLSEKQGEETMMSSLNETIELNEEREEEKGASPGSGFKNFLWHGGSVYDAWFSCASNQ. Residues 59–76 form a helical membrane-spanning segment; the sequence is VAQVLLTLPYSFSQLGMI. Residues 77-78 lie on the Extracellular side of the membrane; that stretch reads SG. A helical transmembrane segment spans residues 79–99; the sequence is IIFQVFYGLMGSWTAYLISIL. The Cytoplasmic segment spans residues 100–134; that stretch reads YVEYRSRKEKENVSFKNHVIQWFEVLEGLLGPYWK. Residues 135 to 155 form a helical membrane-spanning segment; the sequence is AIGLAFNCTFLLFGSVIQLIA. Residues 156-171 are Extracellular-facing; sequence CASNIYYINDHLDKRT. Residues 172–192 form a helical membrane-spanning segment; sequence WTYIFGACCATTVFIPSFHNY. The Cytoplasmic portion of the chain corresponds to 193-195; the sequence is RIW. A helical membrane pass occupies residues 196–216; sequence SFLGLGMTTYTAWYMTIAAIV. The Extracellular segment spans residues 217 to 231; that stretch reads HGQVENVVHSGPKKM. Residues 232–252 form a helical membrane-spanning segment; that stretch reads VWYFTGATNILYTFGGHAVTV. At 253–265 the chain is on the cytoplasmic side; that stretch reads EIMHAMWKPQKFK. Residues 266–286 traverse the membrane as a helical segment; it reads AIYFFATLYVFTLTLPSAIAV. The Extracellular portion of the chain corresponds to 287–313; sequence YWAFGDQLLDHSNAFSLLPRNAWRDAG. The chain crosses the membrane as a helical span at residues 314-334; it reads VILMLIHQFITFGFACTPLYF. The Cytoplasmic segment spans residues 335-355; that stretch reads VWEKVIGMHDTKSIFLRALAR. Residues 356–376 traverse the membrane as a helical segment; the sequence is LPVVIPIWFLAIIFPFFGPIN. Position 377 (S377) is a topological domain, extracellular. The chain crosses the membrane as a helical span at residues 378 to 398; the sequence is AVGALLVSFTVYVIPASAHML. At 399-421 the chain is on the cytoplasmic side; sequence TYRSASARQNAAEKLPKVIPSWT. A helical membrane pass occupies residues 422-442; sequence LMYVINAFVVIWVTIVGFGFG. Residues 443 to 479 lie on the Extracellular side of the membrane; the sequence is GWASMTNFIKQVDTFGLFAKCYQCPPKLPASNHTMHH. N474 carries N-linked (GlcNAc...) asparagine glycosylation.

It belongs to the amino acid/polyamine transporter 2 family. Amino acid/auxin permease (AAAP) (TC 2.A.18.1) subfamily. Shoots and roots of nodulating plants. Higher levels in roots, flowers and stems, lower in nodules, leaves, petioles and shoot apices.

The protein resides in the cell membrane. Carrier protein involved in proton-driven auxin influx. Mediates the formation of auxin gradient from developing leaves (site of auxin biosynthesis) to tips by contributing to the loading of auxin in vascular tissues and facilitating acropetal (base to tip) auxin transport within inner tissues of the root apex, and basipetal (tip to base) auxin transport within outer tissues of the root apex. May be involved in lateral roots and nodules formation. The chain is Auxin transporter-like protein 1 (LAX1) from Medicago truncatula (Barrel medic).